We begin with the raw amino-acid sequence, 111 residues long: uncharacterized protein (111 aa).

3 consecutive transmembrane segments (helical) span residues 22 to 42, 48 to 68, and 75 to 95; these read ASLI…ANIT, LTPA…VSVL, and VLVT…PKIL.

Its subcellular location is the membrane. This is an uncharacterized protein from Saccharomyces cerevisiae (strain ATCC 204508 / S288c) (Baker's yeast).